The chain runs to 931 residues: Dual O-methyltransferase/FAD-dependent monooxygenase elcB (931 aa).

The O-methyltransferase stretch occupies residues 1 to 463; that stretch reads MAASTGLSTV…TTDKARPNGD (463 aa). Aspartate 254 serves as a coordination point for S-adenosyl-L-methionine. Histidine 304 serves as the catalytic Proton acceptor. The interval 455–474 is disordered; sequence TDKARPNGDTTHSGQASIPN. The segment covering 462–474 has biased composition (polar residues); the sequence is GDTTHSGQASIPN. Residues 464-931 form an FAD-dependent monooxygenase region; that stretch reads TTHSGQASIP…TFEELDVAEL (468 aa). Glutamate 520, arginine 604, aspartate 836, and alanine 849 together coordinate FAD.

It in the C-terminal section; belongs to the paxM FAD-dependent monooxygenase family. In the N-terminal section; belongs to the class I-like SAM-binding methyltransferase superfamily. Cation-independent O-methyltransferase family. COMT subfamily.

The enzyme catalyses nor-toralactone + S-adenosyl-L-methionine = toralactone + S-adenosyl-L-homocysteine + H(+). It carries out the reaction toralactone + NADH + O2 + H(+) = 1-(3,4,5-trihydroxy-7-methoxynaphthalen-2-yl)propan-2-one + CO2 + NAD(+). Its pathway is secondary metabolite biosynthesis. Its function is as follows. Dual O-methyltransferase/FAD-dependent monooxygenase; part of the gene cluster that mediates the biosynthesis of elsinochrome C, a perelyenequinone phytotoxin structurally similar to cercosporin. The first step of elsinochrome C biosynthesis is performed by the polyketide synthase elcA which catalyzes the formation of nor-toralactone. The starter unit acyltransferase (SAT) domain of elcA initiates polyketide extension by the selective utilization of acetyl-CoA, which is elongated to the heptaketide in the beta-ketoacyl synthase (KS) domain by successive condensations with six malonyl units introduced by the malonyl acyltransferase (MAT) domain. The product template (PT) domain catalyzes C4-C9 and C2-C11 aldol cyclizations and dehydrations to a trihydroxynaphthalene, which is thought to be delivered to the thioesterase (TE) domain for product release. The bifunctional enzyme elcB then methylates nor-toralactone to toralactone before conducting an unusual oxidative aromatic ring opening. The next step in perylenequinone biosynthesis is an O-methylation at the nascent OH-6 of the elcB product performed by the O-methyltransferase elcD. The oxidative coupling of the two monomeric naphthol units in perylenequinone biosynthesis is catalyzed by the FAD-dependent monooxygenase elcE and the multicopper oxidase elcG. ElcG might catalyze the first intermolecular coupling in a regio- and stereo-selective manner via a phenol radical coupling mechanism and the elcE could forge the second C-C bond intramolecularly via a hydride transfer mechanism. The fasciclin domain-containing protein elcF might also play a role duting this step. The last piece of the puzzle in the biosynthesis of elsinochrome C is the additional annulation by enolate coupling to afford the dihydrobenzo(ghi)perylenequinone system, catalyzed by the FAD-dependent monooxygenase elcH. In Phaeosphaeria nodorum (strain SN15 / ATCC MYA-4574 / FGSC 10173) (Glume blotch fungus), this protein is Dual O-methyltransferase/FAD-dependent monooxygenase elcB.